The primary structure comprises 463 residues: Chromosomal replication initiator protein DnaA (463 aa).

Positions 1 to 83 are domain I, interacts with DnaA modulators; the sequence is MSTNQIILTD…LQLFQHYNNT (83 aa). The segment at 83–124 is domain II; sequence TIKSIEIITKELPGTTQTVTELPTKTFADIGSSELNSENIFS. Residues 125-343 form a domain III, AAA+ region region; that stretch reads TLDVRFTFDN…GALNKVIAHS (219 aa). ATP-binding residues include Gly-171, Gly-173, Lys-174, and Thr-175. The tract at residues 344–463 is domain IV, binds dsDNA; the sequence is NFTLKEITLE…INLLMKILQN (120 aa).

This sequence belongs to the DnaA family. As to quaternary structure, oligomerizes as a right-handed, spiral filament on DNA at oriC.

The protein resides in the cytoplasm. Plays an essential role in the initiation and regulation of chromosomal replication. ATP-DnaA binds to the origin of replication (oriC) to initiate formation of the DNA replication initiation complex once per cell cycle. Binds the DnaA box (a 9 base pair repeat at the origin) and separates the double-stranded (ds)DNA. Forms a right-handed helical filament on oriC DNA; dsDNA binds to the exterior of the filament while single-stranded (ss)DNA is stabiized in the filament's interior. The ATP-DnaA-oriC complex binds and stabilizes one strand of the AT-rich DNA unwinding element (DUE), permitting loading of DNA polymerase. After initiation quickly degrades to an ADP-DnaA complex that is not apt for DNA replication. Binds acidic phospholipids. This Rickettsia conorii (strain ATCC VR-613 / Malish 7) protein is Chromosomal replication initiator protein DnaA.